The primary structure comprises 858 residues: M-phase phosphoprotein 8 (858 aa).

The disordered stretch occupies residues 18–55 (VPDSIGRSPESEGVGAGDEEKDAATKGTVAVGDSEEDG). Residues Ser-51, Ser-85, Ser-136, and Ser-138 each carry the phosphoserine modification. The 60-residue stretch at 59–118 (FEVERILDMKCEGGKNLYKVRWKGYTSEDDTWEPEVHLEDCKEVLLEFRKKLAENKAKAV) folds into the Chromo domain. The tract at residues 80–87 (WKGYTSED) is histone H3K9me3 binding. The interval 129-175 (NDIFEADSDSDQQSDTKEDISPRKKKKKIKCKEETSPEDLRKKRTKM) is disordered. Residue Thr-144 is modified to Phosphothreonine. A phosphoserine; by CDK1 mark is found at Ser-149 and Ser-164. A compositionally biased stretch (basic and acidic residues) spans 159–169 (CKEETSPEDLR). Ser-188 carries the post-translational modification Phosphoserine. Disordered stretches follow at residues 209–234 (ELKD…NKRA) and 250–300 (NRKT…DKTA). Ser-267, Ser-271, and Ser-278 each carry phosphoserine. Residues 273-282 (ILEDDSEDFI) are compositionally biased toward acidic residues. Over residues 283–300 (SDNREENQNVRSVRDKTA) the composition is skewed to basic and acidic residues. Ser-318 carries the post-translational modification Phosphoserine. The segment at 321–431 (EDAGTRVRRK…YDLDKEEKAR (111 aa)) is disordered. Positions 335-357 (RKFEEPKEIKKLESTNAFLERRA) are enriched in basic and acidic residues. Thr-385 carries the post-translational modification Phosphothreonine; by CDK1. Ser-392 and Ser-400 each carry phosphoserine. The span at 407–431 (EKEKKNEPKGKYQKRYDLDKEEKAR) shows a compositional bias: basic and acidic residues. Thr-453 is subject to Phosphothreonine. ANK repeat units lie at residues 598–627 (TGMT…KVNG), 631–660 (NGTT…FVNV), 664–693 (NGET…DCNI), and 697–726 (HQNS…TLSR).

As to quaternary structure, homodimer. Interacts (via chromo domain) with histone H3K9me3. Has the highest affinity for H3K9me3, and lesser affinity for H3K9me2 and H3K9me1. Component of the HUSH complex; at least composed of TASOR, PPHLN1 and MPHOSPH8. Interacts with DNMT3, EHMT1 and SETDB1. Interacts with MORC2; the interaction associateS MORC2 with the HUSH complex which recruits MORC2 to heterochromatic loci. Interacts with ZNF638; leading to recruitment of the HUSH complex to unintegrated retroviral DNA. Interacts with TASOR. In terms of processing, phosphorylated in M (mitotic) phase. Phosphorylation by CDK1 promotes dissociation from chromatin. Expressed in the spermatogonia, spermatocytes and granular cells within the cerebellum.

It localises to the nucleus. It is found in the chromosome. Its function is as follows. Heterochromatin component that specifically recognizes and binds methylated 'Lys-9' of histone H3 (H3K9me) and promotes recruitment of proteins that mediate epigenetic repression. Mediates recruitment of the HUSH complex to H3K9me3 sites: the HUSH complex is recruited to genomic loci rich in H3K9me3 and is required to maintain transcriptional silencing by promoting recruitment of SETDB1, a histone methyltransferase that mediates further deposition of H3K9me3, as well as MORC2. Binds H3K9me and promotes DNA methylation by recruiting DNMT3A to target CpG sites; these can be situated within the coding region of the gene. Mediates down-regulation of CDH1 expression. Also represses L1 retrotransposons in collaboration with MORC2 and, probably, SETDB1, the silencing is dependent of repressive epigenetic modifications, such as H3K9me3 mark. Silencing events often occur within introns of transcriptionally active genes, and lead to the down-regulation of host gene expression. The HUSH complex is also involved in the silencing of unintegrated retroviral DNA by being recruited by ZNF638: some part of the retroviral DNA formed immediately after infection remains unintegrated in the host genome and is transcriptionally repressed. The chain is M-phase phosphoprotein 8 from Mus musculus (Mouse).